A 505-amino-acid chain; its full sequence is Acetyl-coenzyme A carboxylase carboxyl transferase subunit beta, chloroplastic (505 aa).

Over residues 189–205 (ESVSNSKSGSSSIRTGG) the composition is skewed to low complexity. The interval 189–213 (ESVSNSKSGSSSIRTGGNSSDFNRR) is disordered. The 272-residue stretch at 228-499 (LWVQCENCYG…NQNSSRALGS (272 aa)) folds into the CoA carboxyltransferase N-terminal domain. Residues Cys232, Cys235, Cys251, and Cys254 each coordinate Zn(2+). A C4-type zinc finger spans residues 232 to 254 (CENCYGLNYKKFVSFKMHICEQC).

The protein belongs to the AccD/PCCB family. Acetyl-CoA carboxylase is a heterohexamer composed of biotin carboxyl carrier protein, biotin carboxylase and 2 subunits each of ACCase subunit alpha and ACCase plastid-coded subunit beta (accD). Requires Zn(2+) as cofactor.

It is found in the plastid. It localises to the chloroplast stroma. The catalysed reaction is N(6)-carboxybiotinyl-L-lysyl-[protein] + acetyl-CoA = N(6)-biotinyl-L-lysyl-[protein] + malonyl-CoA. It participates in lipid metabolism; malonyl-CoA biosynthesis; malonyl-CoA from acetyl-CoA: step 1/1. Functionally, component of the acetyl coenzyme A carboxylase (ACC) complex. Biotin carboxylase (BC) catalyzes the carboxylation of biotin on its carrier protein (BCCP) and then the CO(2) group is transferred by the transcarboxylase to acetyl-CoA to form malonyl-CoA. The chain is Acetyl-coenzyme A carboxylase carboxyl transferase subunit beta, chloroplastic from Calycanthus floridus var. glaucus (Eastern sweetshrub).